The chain runs to 123 residues: UPF0102 protein Csal_2201 (123 aa).

It belongs to the UPF0102 family.

The protein is UPF0102 protein Csal_2201 of Chromohalobacter salexigens (strain ATCC BAA-138 / DSM 3043 / CIP 106854 / NCIMB 13768 / 1H11).